We begin with the raw amino-acid sequence, 88 residues long: Small ribosomal subunit protein bS20 (88 aa).

The segment at 1 to 27 (MANTASAKKMTRKIAKRTAINRSRRSR) is disordered.

It belongs to the bacterial ribosomal protein bS20 family.

Its function is as follows. Binds directly to 16S ribosomal RNA. The polypeptide is Small ribosomal subunit protein bS20 (Methylobacterium radiotolerans (strain ATCC 27329 / DSM 1819 / JCM 2831 / NBRC 15690 / NCIMB 10815 / 0-1)).